Consider the following 393-residue polypeptide: MQDIVQDALDNAEAEQREMDGDGDGDEFGDPRIVIVGCGGAGNNTVNRLYNIGVEGADTVAINTDKQHLKMIKADTKILVGKSLTNGLGAGGDPSMGERATEMAQGTIKEVLGDADLVFVTAGMGGGTGTGAAPVVSKIAKEQGAIVVGMVSTPFNVERARTVKAEEGLEKLREKADSIIVLDNNRLLDYVPNLPIGKAFSVMDQIIAETVKGISETITQPSLINLDYADMTAIMNQGGVAVMLVGETQDKNKTNEVVKDAMNHPLLDVDYRGASGGLVHITGGPDLTLKEAEGIADNITERLDASANVIWGARIQESYKGKVRVMAIMTGVQSAQVLGPSTQKQADKSRRELQDVDSKQRAADDAGAGGFGGAHSDGGQDEVEQENGLDVIR.

Residues 1-28 (MQDIVQDALDNAEAEQREMDGDGDGDEF) are disordered. GTP-binding positions include 40 to 44 (GAGNN), 127 to 129 (GTG), Glu158, Arg161, and Asp204. Residues 339–393 (GPSTQKQADKSRRELQDVDSKQRAADDAGAGGFGGAHSDGGQDEVEQENGLDVIR) form a disordered region. Positions 345–364 (QADKSRRELQDVDSKQRAAD) are enriched in basic and acidic residues. Residues 367–376 (GAGGFGGAHS) are compositionally biased toward gly residues.

Belongs to the FtsZ family. As to quaternary structure, homodimer. Polymerizes to form a dynamic ring structure in a strictly GTP-dependent manner. Interacts directly with several other division proteins.

The protein localises to the cytoplasm. Its function is as follows. Essential cell division protein that forms a contractile ring structure (Z ring) at the future cell division site. The regulation of the ring assembly controls the timing and the location of cell division. One of the functions of the FtsZ ring is to recruit other cell division proteins to the septum to produce a new cell wall between the dividing cells. Binds GTP and shows GTPase activity. Overexpression causes significant changes in cell morphology. The protein is Cell division protein FtsZ 2 of Halobacterium salinarum (strain ATCC 29341 / DSM 671 / R1).